We begin with the raw amino-acid sequence, 421 residues long: D-inositol 3-phosphate glycosyltransferase (421 aa).

H13 is a binding site for 1D-myo-inositol 3-phosphate. UDP-N-acetyl-alpha-D-glucosamine is bound by residues 19-20 and G27; that span reads QP. 1D-myo-inositol 3-phosphate contacts are provided by residues 24–29, K82, Y115, T139, and R159; that span reads DAGGMN. Positions 233, 238, and 294 each coordinate UDP-N-acetyl-alpha-D-glucosamine. The Mg(2+) site is built by F303, R304, and A306. E316 and E324 together coordinate UDP-N-acetyl-alpha-D-glucosamine. Position 330 (T330) interacts with Mg(2+).

Belongs to the glycosyltransferase group 1 family. MshA subfamily. Homodimer.

It carries out the reaction 1D-myo-inositol 3-phosphate + UDP-N-acetyl-alpha-D-glucosamine = 1D-myo-inositol 2-acetamido-2-deoxy-alpha-D-glucopyranoside 3-phosphate + UDP + H(+). Functionally, catalyzes the transfer of a N-acetyl-glucosamine moiety to 1D-myo-inositol 3-phosphate to produce 1D-myo-inositol 2-acetamido-2-deoxy-glucopyranoside 3-phosphate in the mycothiol biosynthesis pathway. The polypeptide is D-inositol 3-phosphate glycosyltransferase (Arthrobacter sp. (strain FB24)).